Reading from the N-terminus, the 353-residue chain is Fe(3+) ions import ATP-binding protein FbpC (353 aa).

Positions 9–239 (VTFENVTKKF…PASAFIADFM (231 aa)) constitute an ABC transporter domain. Residue 41-48 (GLSGCGKT) coordinates ATP.

Belongs to the ABC transporter superfamily. Fe(3+) ion importer (TC 3.A.1.10) family. As to quaternary structure, the complex is composed of two ATP-binding proteins (FbpC), two transmembrane proteins (FbpB) and a solute-binding protein (FbpA).

It localises to the cell inner membrane. The catalysed reaction is Fe(3+)(out) + ATP + H2O = Fe(3+)(in) + ADP + phosphate + H(+). Its function is as follows. Part of the ABC transporter complex FbpABC involved in Fe(3+) ions import. Responsible for energy coupling to the transport system. This chain is Fe(3+) ions import ATP-binding protein FbpC, found in Brucella melitensis biotype 1 (strain ATCC 23456 / CCUG 17765 / NCTC 10094 / 16M).